The sequence spans 425 residues: Mothers against decapentaplegic homolog 3 (425 aa).

Residue S2 is modified to N-acetylserine. T8 carries the phosphothreonine; by CDK2 and CDK4 modification. Residues 10–136 (PIVKRLLGWK…YQRVETPVLP (127 aa)) form the MH1 domain. A Glycyl lysine isopeptide (Lys-Gly) (interchain with G-Cter in ubiquitin) cross-link involves residue K33. C64 contributes to the Zn(2+) binding site. K81 is covalently cross-linked (Glycyl lysine isopeptide (Lys-Gly) (interchain with G-Cter in ubiquitin)). Zn(2+)-binding residues include C109, C121, and H126. Positions 137 to 231 (PVLVPRHTEI…QPVTYCEPAF (95 aa)) are linker. Polar residues predominate over residues 165–177 (NFPAGIEPQSNIP). A disordered region spans residues 165–208 (NFPAGIEPQSNIPETPPPGYLSEDGETSDHQMNHSMDAGSPNLS). T179 carries the post-translational modification Phosphothreonine; by CDK2, CDK4 and MAPK. S204 carries the post-translational modification Phosphoserine; by GSK3 and MAPK. A Phosphoserine; by MAPK modification is found at S208. Residue S213 is modified to Phosphoserine; by CDK2 and CDK4. The 194-residue stretch at 232 to 425 (WCSISYYELN…SPSIRCSSVS (194 aa)) folds into the MH2 domain. A sufficient for interaction with XPO4 region spans residues 271–324 (LGLLSNVNRNAAVELTRRHIGRGVRLYYIGGEVFAECLSDSAIFVQSPNCNQRY). The residue at position 378 (K378) is an N6-acetyllysine. S416 bears the Phosphoserine mark. At S418 the chain carries Phosphoserine; by CK1. Residues S422, S423, and S425 each carry the phosphoserine; by TGFBR1 modification.

Belongs to the dwarfin/SMAD family. Monomer; in the absence of TGF-beta. Homooligomer; in the presence of TGF-beta. Heterotrimer; forms a heterotrimer in the presence of TGF-beta consisting of two molecules of C-terminally phosphorylated SMAD2 or SMAD3 and one of SMAD4 to form the transcriptionally active SMAD2/SMAD3-SMAD4 complex. Part of a complex consisting of MAGI2/ARIP1, ACVR2A, ACVR1B and SMAD3. Forms a complex with SMAD2 and TRIM33 upon addition of TGF-beta. Found in a complex composed of SMAD3, RAN and XPO4; within the complex interacts directly with XPO4. Component of the multimeric complex SMAD3/SMAD4/JUN/FOS which forms at the AP1 promoter site; required for synergistic transcriptional activity in response to TGF-beta. Part of a ternary complex composed of SMAD3, ITCH/AIP4 and NEDD9/HEF1; within the complex NEDD9/HEF1 interacts (via N-terminus) with ITCH/AIP4; the complex mediates ubiquitination and proteasomal degradation of NEDD9/HEF1. Interacts with NEDD9; the interaction promotes NEDD9 ubiquitination and proteasomal degradation. Interacts (via an N-terminal domain) with JUN (via its basic DNA binding and leucine zipper domains); this interaction is essential for DNA binding and cooperative transcriptional activity in response to TGF-beta. Identified in a complex that contains at least ZNF451, SMAD2, SMAD3 and SMAD4. Interacts with PPM1A; the interaction dephosphorylates SMAD3 in the C-terminal SXS motif leading to disruption of the SMAD2/3-SMAD4 complex, nuclear export and termination of TGF-beta signaling. Interacts (via MH2 domain) with ZMIZ1 (via SP-RING-type domain); in the TGF-beta signaling pathway increases the activity of the SMAD3/SMAD4 transcriptional complex. Interacts (when phosphorylated) with RNF111; RNF111 acts as an enhancer of the transcriptional responses by mediating ubiquitination and degradation of SMAD3 inhibitors. Interacts (dephosphorylated form via the MH1 and MH2 domains) with RANBP3 (via its C-terminal R domain); the interaction results in the export of dephosphorylated SMAD3 out of the nucleus and termination of the TGF-beta signaling. Interacts (via MH2 domain) with LEMD3; the interaction represses SMAD3 transcriptional activity through preventing the formation of the heteromeric complex with SMAD4 and translocation to the nucleus. Interacts (via the linker region) with EP300 (C-terminal); the interaction promotes SMAD3 acetylation and is enhanced by TGF-beta phosphorylation in the C-terminal of SMAD3. This interaction can be blocked by competitive binding of adenovirus oncoprotein E1A to the same C-terminal site on EP300, which then results in partially inhibited SMAD3/SMAD4 transcriptional activity. Interacts with TGFBR1. Interacts with TGFB1I1. Interacts with PRDM16. Interacts with SNW1. Interacts (via MH2 domain) with ZFYVE9. Interacts with HDAC1. Interacts with TGIF2. Interacts with SKOR1. Interacts with SKOR2. Interacts with DACH1; the interaction inhibits the TGF-beta signaling. Interacts with RBPMS. Interacts (via MH2 domain) with MECOM. Interacts with WWTR1 (via its coiled-coil domain). Interacts with SKI; the interaction represses SMAD3 transcriptional activity. Interacts with MEN1. Interacts with IL1F7. Interaction with CSNK1G2. Interacts with PDPK1 (via PH domain). Interacts with DAB2; the interactions are enhanced upon TGF-beta stimulation. Interacts with USP15. Interacts with PPP5C; the interaction decreases SMAD3 phosphorylation and protein levels. Interacts with LDLRAD4 (via the SMAD interaction motif). Interacts with PMEPA1. Interacts with ZNF451. Interacts with ZFHX3. Interacts weakly with ZNF8. Interacts with STUB1, HSPA1A, HSPA1B, HSP90AA1 and HSP90AB1. Interacts with YAP1 (when phosphorylated at 'Ser-55'). Interacts with MAGI2/ARIP1. Interacts (via MH2 domain) with CITED2 (via C-terminus). Interacts with HGS. Interacts with WWP1. Interacts with TTRAP. Interacts with FOXL2. Interacts with PML. Interacts with NEDD4L; the interaction requires TGF-beta stimulation. Interacts with ZC3H3. Interacts with TGIF. Interacts with CREBBP. Interacts with ATF2. Interacts with NEDD9; the interaction is inhibited by oxidation of NEDD9. Interacts with MTMR4; negatively regulates TGF-beta signaling through SMAD3 dephosphorylation and retention in endosomes. Post-translationally, phosphorylated on serine and threonine residues. Enhanced phosphorylation in the linker region on Thr-179, Ser-204 and Ser-208 on EGF and TGF-beta treatment. Ser-208 is the main site of MAPK-mediated phosphorylation. CDK-mediated phosphorylation occurs in a cell-cycle dependent manner and inhibits both the transcriptional activity and antiproliferative functions of SMAD3. This phosphorylation is inhibited by flavopiridol. Maximum phosphorylation at the G(1)/S junction. Also phosphorylated on serine residues in the C-terminal SXS motif by TGFBR1 and ACVR1. TGFBR1-mediated phosphorylation at these C-terminal sites is required for interaction with SMAD4, nuclear location and transactivational activity, and appears to be a prerequisite for the TGF-beta mediated phosphorylation in the linker region. Dephosphorylated in the C-terminal SXS motif by PPM1A. This dephosphorylation disrupts the interaction with SMAD4, promotes nuclear export and terminates TGF-beta-mediated signaling. Phosphorylation at Ser-418 by CSNK1G2/CK1 promotes ligand-dependent ubiquitination and subsequent proteasome degradation, thus inhibiting SMAD3-mediated TGF-beta responses. Phosphorylated by PDPK1. Acetylation in the nucleus by EP300 in the MH2 domain regulates positively its transcriptional activity and is enhanced by TGF-beta. In terms of processing, poly-ADP-ribosylated by PARP1 and PARP2. ADP-ribosylation negatively regulates SMAD3 transcriptional responses during the course of TGF-beta signaling. Post-translationally, ubiquitinated. Monoubiquitinated, leading to prevent DNA-binding. Deubiquitination by USP15 alleviates inhibition and promotes activation of TGF-beta target genes. Ubiquitinated by RNF111, leading to its degradation: only SMAD3 proteins that are 'in use' are targeted by RNF111, RNF111 playing a key role in activating SMAD3 and regulating its turnover. Undergoes STUB1-mediated ubiquitination and degradation. In terms of tissue distribution, highly expressed in the brain and ovary. Detected in the pyramidal cells of the hippocampus, granule cells of the dentate gyrus, granular cells of the cerebral cortex and the granulosa cells of the ovary.

Its subcellular location is the cytoplasm. It localises to the nucleus. Receptor-regulated SMAD (R-SMAD) that is an intracellular signal transducer and transcriptional modulator activated by TGF-beta (transforming growth factor) and activin type 1 receptor kinases. Binds the TRE element in the promoter region of many genes that are regulated by TGF-beta and, on formation of the SMAD3/SMAD4 complex, activates transcription. Also can form a SMAD3/SMAD4/JUN/FOS complex at the AP-1/SMAD site to regulate TGF-beta-mediated transcription. Has an inhibitory effect on wound healing probably by modulating both growth and migration of primary keratinocytes and by altering the TGF-mediated chemotaxis of monocytes. This effect on wound healing appears to be hormone-sensitive. Regulator of chondrogenesis and osteogenesis and inhibits early healing of bone fractures. Positively regulates PDPK1 kinase activity by stimulating its dissociation from the 14-3-3 protein YWHAQ which acts as a negative regulator. In Sus scrofa (Pig), this protein is Mothers against decapentaplegic homolog 3 (SMAD3).